The primary structure comprises 397 residues: Oxygen-dependent coproporphyrinogen-III oxidase, chloroplastic (397 aa).

The tract at residues 76 to 95 (ESDMGSNVTSNSSSVRGRFE) is disordered. The span at 79 to 90 (MGSNVTSNSSSV) shows a compositional bias: polar residues. The interval 135-144 (VLQDGAVFEK) is important for dimerization. Ser-185 contacts substrate. The active-site Proton donor is the His-199. Residues 201 to 203 (NYR) and 355 to 360 (GGRIES) contribute to the substrate site. The important for dimerization stretch occupies residues 337–372 (YVEFNLVYDRGTTFGLKTGGRIESILVSLPLTARWE).

It belongs to the aerobic coproporphyrinogen-III oxidase family. In terms of assembly, homodimer.

The protein localises to the plastid. It localises to the chloroplast. The catalysed reaction is coproporphyrinogen III + O2 + 2 H(+) = protoporphyrinogen IX + 2 CO2 + 2 H2O. The protein operates within porphyrin-containing compound metabolism; protoporphyrin-IX biosynthesis; protoporphyrinogen-IX from coproporphyrinogen-III (O2 route): step 1/1. In terms of biological role, involved in the heme and chlorophyll biosynthesis. Catalyzes the aerobic oxidative decarboxylation of propionate groups of rings A and B of coproporphyrinogen-III to yield the vinyl groups in protoporphyrinogen-IX. This chain is Oxygen-dependent coproporphyrinogen-III oxidase, chloroplastic (CPX), found in Nicotiana tabacum (Common tobacco).